Here is a 102-residue protein sequence, read N- to C-terminus: Large ribosomal subunit protein uL24 (102 aa).

Belongs to the universal ribosomal protein uL24 family. Part of the 50S ribosomal subunit.

Functionally, one of two assembly initiator proteins, it binds directly to the 5'-end of the 23S rRNA, where it nucleates assembly of the 50S subunit. One of the proteins that surrounds the polypeptide exit tunnel on the outside of the subunit. This is Large ribosomal subunit protein uL24 from Rhizobium rhizogenes (strain K84 / ATCC BAA-868) (Agrobacterium radiobacter).